A 551-amino-acid chain; its full sequence is Protein GPR107 (551 aa).

Positions 1–33 (MAVRVPLGCTGSFCPRLLPLLALLELLVDPSLG) are cleaved as a signal peptide. Residues 34-262 (RVHHLALKDD…YLSAGEIPLP (229 aa)) are Extracellular-facing. Residue Asn-64 is glycosylated (N-linked (GlcNAc...) asparagine). The interval 127–183 (GVKVRSPPEAGKQLPEIVFSKDEKVPSRSQEPAVSSNPKDSKVQRTPDGSKAQRSTV) is disordered. Polar residues predominate over residues 153–164 (SRSQEPAVSSNP). N-linked (GlcNAc...) asparagine glycosylation occurs at Asn-209. The chain crosses the membrane as a helical span at residues 263–283 (KLYVSMALLFFLSGTVWIHIL). At 284–292 (RKRRNDVFK) the chain is on the cytoplasmic side. Residues 293–313 (IHWLMAALPFTKSLSLVFHAI) traverse the membrane as a helical segment. Residues 314–336 (DYHYISSQGFPIEGWAVVYYITH) are Extracellular-facing. A helical transmembrane segment spans residues 337-357 (LLKGALLFITIALIGTGWAFI). Topologically, residues 358-367 (KHILSDKDKK) are cytoplasmic. Residues 368 to 388 (IFMIVIPLQVLANVAYIIIES) traverse the membrane as a helical segment. Residues 389-401 (TEEGTTEYGLWKD) lie on the Extracellular side of the membrane. Residues 402 to 422 (SLFLVDLLCCGAILFPVVWSI) form a helical membrane-spanning segment. Over 423–443 (RHLQEASATDGKAAINLAKLK) the chain is Cytoplasmic. The chain crosses the membrane as a helical span at residues 444–466 (LFRHYYVLIVCYIYFTRIIAFLL). The Extracellular portion of the chain corresponds to 467-475 (KFAVPFQWK). The chain crosses the membrane as a helical span at residues 476–495 (WLYQLLDETATLVFFVLTGY). Residues 496 to 551 (KFRPASDNPYLQLSQEEDDLEMESVVTTSGVMENMKKVKKVSNGAVEPQGSWEGTA) are Cytoplasmic-facing.

This sequence belongs to the LU7TM family. Cleaved by FURIN to yield two fragments that remain associated via a disulfide bond. Widely expressed. Not detected in the duodenum, nor in the exocrine pancreas.

Its subcellular location is the cell membrane. The protein resides in the golgi apparatus. The protein localises to the trans-Golgi network membrane. Has been proposed to act as a receptor for neuronostatin, a peptide derived from the somatostatin/SST precursor. Involved in blood sugar regulation through the induction of glucagon in response to low glucose. The sequence is that of Protein GPR107 (Gpr107) from Rattus norvegicus (Rat).